The chain runs to 208 residues: LexA repressor (208 aa).

The segment at residues 30-50 is a DNA-binding region (H-T-H motif); sequence VREICAAVKLSSTSTVHGHLA. Residues Ser129 and Lys167 each act as for autocatalytic cleavage activity in the active site.

The protein belongs to the peptidase S24 family. Homodimer.

The catalysed reaction is Hydrolysis of Ala-|-Gly bond in repressor LexA.. Its function is as follows. Represses a number of genes involved in the response to DNA damage (SOS response), including recA and lexA. In the presence of single-stranded DNA, RecA interacts with LexA causing an autocatalytic cleavage which disrupts the DNA-binding part of LexA, leading to derepression of the SOS regulon and eventually DNA repair. The chain is LexA repressor from Lactobacillus helveticus (strain DPC 4571).